The chain runs to 110 residues: Insulin (110 aa).

Residues 1-24 (MALWMRLLPLLVLLALWGPDPASA) form the signal peptide. 3 disulfide bridges follow: Cys-31–Cys-96, Cys-43–Cys-109, and Cys-95–Cys-100. The propeptide at 57–87 (EAEDLQVGQVELGGGPGAGSLQPLALEGSLQ) is c peptide.

Belongs to the insulin family. Heterodimer of a B chain and an A chain linked by two disulfide bonds.

It is found in the secreted. In terms of biological role, insulin decreases blood glucose concentration. It increases cell permeability to monosaccharides, amino acids and fatty acids. It accelerates glycolysis, the pentose phosphate cycle, and glycogen synthesis in liver. In Pan troglodytes (Chimpanzee), this protein is Insulin (INS).